The sequence spans 221 residues: Kinetochore protein Spc25 (221 aa).

Positions 63–114 (VIQRREEMEKRVSFMEELAQEVEATKQRNLVMREQIKQQKMLVRQRKNEIME) form a coiled coil.

It belongs to the SPC25 family. In terms of assembly, component of the Ndc80 complex, which is composed of Ndc80, Nuf2 and Spc25.

It is found in the nucleus. The protein localises to the chromosome. It localises to the centromere. Its subcellular location is the kinetochore. Functionally, acts as a component of the essential kinetochore-associated Ndc80 complex, which is required for chromosome segregation and spindle checkpoint activity during meiosis and mitosis. Required for kinetochore integrity and the organization of stable microtubule binding sites in the outer plate of the kinetochore. Participates in SAC signaling that responds specifically to disruptions in spindle microtubule dynamics. The NDC80 complex synergistically enhances the affinity of the SKA1 complex for microtubules and may allow the NDC80 complex to track depolymerizing microtubules. This chain is Kinetochore protein Spc25, found in Drosophila eugracilis (Fruit fly).